The sequence spans 312 residues: Olfactory receptor 2J2 (312 aa).

Over 1–26 the chain is Extracellular; the sequence is MMIKKNASSEDFFILLGFSNWPQLEV. N-linked (GlcNAc...) asparagine glycosylation is present at N6. A helical transmembrane segment spans residues 27–50; that stretch reads VLFVVILIFYLMTLTGNLFIIILS. The Cytoplasmic portion of the chain corresponds to 51 to 58; sequence YVDSHLHT. Residues 59 to 80 form a helical membrane-spanning segment; sequence PMYFFLSNLSFLDLCHTTSSIP. Over 81–101 the chain is Extracellular; that stretch reads QLLVNLRGPEKTISYAGCMVQ. C98 and C190 form a disulfide bridge. Residues 102-121 traverse the membrane as a helical segment; that stretch reads LYFVLALGIAECVLLVVMSY. The Cytoplasmic portion of the chain corresponds to 122–140; that stretch reads DRYVAVCRPLHYTVLMHPR. The chain crosses the membrane as a helical span at residues 141–159; the sequence is FCHLLAAASWVIGFTISAL. The Extracellular segment spans residues 160–196; sequence HSSFTFWVPLCGHRLVDHFFCEVPALLRLSCVDTHAN. A helical membrane pass occupies residues 197 to 220; it reads ELTLMVMSSIFVLIPLILILTAYG. Over 221–237 the chain is Cytoplasmic; the sequence is AIARAVLSMQSTTGLQK. The chain crosses the membrane as a helical span at residues 238-260; sequence VFRTCGAHLMVVSLFFIPVMCMY. At 261 to 273 the chain is on the extracellular side; that stretch reads LQPPSENSPDQGK. A helical transmembrane segment spans residues 274–293; it reads FIALFYTVVTPSLNPLIYTL. At 294–312 the chain is on the cytoplasmic side; sequence RNKHVKGAAKRLLGWEWGK.

The protein belongs to the G-protein coupled receptor 1 family.

The protein localises to the cell membrane. In terms of biological role, odorant receptor. This Homo sapiens (Human) protein is Olfactory receptor 2J2 (OR2J2).